We begin with the raw amino-acid sequence, 130 residues long: Large ribosomal subunit protein bL17 (130 aa).

Belongs to the bacterial ribosomal protein bL17 family. Part of the 50S ribosomal subunit. Contacts protein L32.

The sequence is that of Large ribosomal subunit protein bL17 from Shewanella loihica (strain ATCC BAA-1088 / PV-4).